The following is a 397-amino-acid chain: Acetate kinase 2 (397 aa).

Residue asparagine 10 participates in Mg(2+) binding. Lysine 17 provides a ligand contact to ATP. Arginine 90 serves as a coordination point for substrate. Aspartate 147 functions as the Proton donor/acceptor in the catalytic mechanism. Residues 207 to 211, 281 to 283, and 329 to 333 each bind ATP; these read HLGNG, DCR, and GIGEN. Glutamate 383 serves as a coordination point for Mg(2+).

It belongs to the acetokinase family. Homodimer. It depends on Mg(2+) as a cofactor. Requires Mn(2+) as cofactor.

Its subcellular location is the cytoplasm. It catalyses the reaction acetate + ATP = acetyl phosphate + ADP. It functions in the pathway metabolic intermediate biosynthesis; acetyl-CoA biosynthesis; acetyl-CoA from acetate: step 1/2. Functionally, catalyzes the formation of acetyl phosphate from acetate and ATP. Can also catalyze the reverse reaction. The polypeptide is Acetate kinase 2 (Photobacterium profundum (strain SS9)).